Consider the following 321-residue polypeptide: NADH-ubiquinone oxidoreductase chain 1 (321 aa).

8 helical membrane passes run 9 to 29 (ITNS…LTLL), 75 to 95 (ILFT…WAPM), 106 to 126 (LGLL…LWSG), 151 to 171 (TLGL…LMLF), 177 to 197 (HMWL…STLA), 219 to 239 (VEFS…NILF), 256 to 276 (PQLF…LFLW), and 297 to 317 (YLPL…ALCG).

This sequence belongs to the complex I subunit 1 family.

It localises to the mitochondrion inner membrane. The enzyme catalyses a ubiquinone + NADH + 5 H(+)(in) = a ubiquinol + NAD(+) + 4 H(+)(out). Its function is as follows. Core subunit of the mitochondrial membrane respiratory chain NADH dehydrogenase (Complex I) that is believed to belong to the minimal assembly required for catalysis. Complex I functions in the transfer of electrons from NADH to the respiratory chain. The immediate electron acceptor for the enzyme is believed to be ubiquinone. The chain is NADH-ubiquinone oxidoreductase chain 1 (MT-ND1) from Lycodon semicarinatus (Ryukyu odd-tooth snake).